The primary structure comprises 99 residues: MASKRIIRMSDLLHTTPVFNRGYRFQWEQAQQSYVILYPEGLVRLNESATLILKQIDGKLTVHDIIQNLSAQFPDATGLDQDIVEFLKQAESRQWICLQ.

Belongs to the PqqD family. In terms of assembly, monomer. Interacts with PqqE.

Its pathway is cofactor biosynthesis; pyrroloquinoline quinone biosynthesis. In terms of biological role, functions as a PqqA binding protein and presents PqqA to PqqE, in the pyrroloquinoline quinone (PQQ) biosynthetic pathway. This is PqqA binding protein from Acinetobacter baylyi (strain ATCC 33305 / BD413 / ADP1).